The sequence spans 813 residues: MTSFQEVPLQTSNFAHVIFQNVAKSYLPNAHLECHYTLTPYIHPHPKDWVGIFKVGWSTARDYYTFLWSPMPEHYVEGSTVNCVLAFQGYYLPNDDGEFYQFCYVTHKGEIRGASTPFQFRASSPVEELLTMEDEGNSDMLVVTTKAGLLELKIEKTMKEKEELLKLIAVLEKETAQLREQVGRMERELNHEKERCDQLQAEQKGLTEVTQSLKMENEEFKKRFSDATSKAHQLEEDIVSVTHKAIEKETELDSLKDKLKKAQHEREQLECQLKTEKDEKELYKVHLKNTEIENTKLMSEVQTLKNLDGNKESVITHFKEEIGRLQLCLAEKENLQRTFLLTTSSKEDTFFLKEQLRKAEEQVQATRQEVVFLAKELSDAVNVRDRTMADLHTARLENEKVKKQLADAVAELKLNAMKKDQDKTDTLEHELRREVEDLKLRLQMAADHYKEKFKECQRLQKQINKLSDQSANNNNVFTKKMGNQQKVNDASVNTDPATSASTVDVKPSPSAAEADFDIVTKGQVCEMTKEIADKTEKYNKCKQLLQDEKAKCNKYADELAKMELKWKEQVKIAENVKLELAEVQDNYKLQLAEKDKEISGLTSHLENLSREKELKRSLENQAERKMEGQNSQSPQCLKTCSEQNGYVLTLSNAQPVLQYGNPYASQETRDGADGAFYPDEIQRPPVRVPSWGLEDNVVCSQPARNLSRPDGLEDSEDSKEDENAPTAPDPPSQHLRGHGTGFCFDSSFDVHKKCPLCELMFPPNYDQSKFEEHVESHWKVCPMCSEQFPPDYDQQVFERHVQTHFDQNVLNFD.

3 positions are modified to phosphoserine: S124, S138, and S225. A coiled-coil region spans residues 144–627 (TTKAGLLELK…LENQAERKME (484 aa)). Residues 320 to 420 (EEIGRLQLCL…ELKLNAMKKD (101 aa)) are oligomerization. Residues 489 to 502 (DASVNTDPATSAST) are compositionally biased toward polar residues. A disordered region spans residues 489-508 (DASVNTDPATSASTVDVKPS). 3 positions are modified to phosphoserine: S617, S633, and S690. The disordered stretch occupies residues 663-738 (YASQETRDGA…DPPSQHLRGH (76 aa)). UBZ1-type zinc fingers lie at residues 751 to 777 (HKKCPLCELMFPPNYDQSKFEEHVESH) and 778 to 804 (WKVCPMCSEQFPPDYDQQVFERHVQTH). 8 residues coordinate Zn(2+): C754, C757, H773, H777, C781, C784, H800, and H804.

As to quaternary structure, homooligomer. Interacts with TNFAIP3. Interacts with STARD13. Interacts with MYO6. Interacts with TOM1; the interaction is indirect and is mediated by MYO6, which acts as a bridge between TOM1 and TAX1BP1. Interacts with MAVS; this interaction induces MAVS polyubiquitination. Interacts with TNIP1. Interacts with TRAF6; this interaction mediates deubiquitination of TRAF6 and inhibition of NF-kappa-B activation. Interacts with RIPK1; this interaction negatively regulates RIPK1 ubiquitination. Interacts with NBR1. Interacts with TBK1. Interacts with RB1CC1. Interacts with SQSTM1. Interacts with AZI2.

It is found in the cytoplasm. It localises to the mitochondrion. Its subcellular location is the preautophagosomal structure. The protein resides in the cytoplasmic vesicle. The protein localises to the autophagosome. Functionally, ubiquitin-binding adapter that participates in inflammatory, antiviral and innate immune processes as well as selective autophagy regulation. Plays a key role in the negative regulation of NF-kappa-B and IRF3 signalings by acting as an adapter for the ubiquitin-editing enzyme A20/TNFAIP3 to bind and inactivate its substrates. Disrupts the interactions between the E3 ubiquitin ligase TRAF3 and TBK1/IKBKE to attenuate 'Lys63'-linked polyubiquitination of TBK1 and thereby IFN-beta production. Also recruits A20/TNFAIP3 to ubiquitinated signaling proteins TRAF6 and RIPK1, leading to their deubiquitination and disruption of IL-1 and TNF-induced NF-kappa-B signaling pathways. Inhibits virus-induced apoptosis by inducing the 'Lys-48'-linked polyubiquitination and degradation of MAVS via recruitment of the E3 ligase ITCH, thereby attenuating MAVS-mediated apoptosis signaling. As a macroautophagy/autophagy receptor, facilitates the xenophagic clearance of pathogenic bacteria such as Salmonella typhimurium and Mycobacterium tuberculosis. Upon NBR1 recruitment to the SQSTM1-ubiquitin condensates, acts as the major recruiter of RB1CC1 to these ubiquitin condensates to promote their autophagic degradation. The protein is Tax1-binding protein 1 homolog (TAX1BP1) of Pongo abelii (Sumatran orangutan).